We begin with the raw amino-acid sequence, 246 residues long: tRNA pseudouridine synthase A (246 aa).

The active-site Nucleophile is aspartate 52. Tyrosine 110 contributes to the substrate binding site.

This sequence belongs to the tRNA pseudouridine synthase TruA family. In terms of assembly, homodimer.

The catalysed reaction is uridine(38/39/40) in tRNA = pseudouridine(38/39/40) in tRNA. Its function is as follows. Formation of pseudouridine at positions 38, 39 and 40 in the anticodon stem and loop of transfer RNAs. This is tRNA pseudouridine synthase A from Exiguobacterium sp. (strain ATCC BAA-1283 / AT1b).